Reading from the N-terminus, the 140-residue chain is Large ribosomal subunit protein uL11 (140 aa).

This sequence belongs to the universal ribosomal protein uL11 family. Part of the ribosomal stalk of the 50S ribosomal subunit. Interacts with L10 and the large rRNA to form the base of the stalk. L10 forms an elongated spine to which L12 dimers bind in a sequential fashion forming a multimeric L10(L12)X complex. Post-translationally, one or more lysine residues are methylated.

Functionally, forms part of the ribosomal stalk which helps the ribosome interact with GTP-bound translation factors. This is Large ribosomal subunit protein uL11 from Karelsulcia muelleri (strain GWSS) (Sulcia muelleri).